A 90-amino-acid chain; its full sequence is Probable small nuclear ribonucleoprotein E (90 aa).

The Sm domain maps to 14-89 (VNLIFRYLQN…ITLIHAAQQE (76 aa)).

This sequence belongs to the snRNP Sm proteins family. In terms of assembly, core component of the spliceosomal U1, U2, U4 and U5 small nuclear ribonucleoproteins (snRNPs), the building blocks of the spliceosome.

Its subcellular location is the nucleus. It is found in the cytoplasm. The protein resides in the cytosol. Plays a role in pre-mRNA splicing as a core component of the spliceosomal U1, U2, U4 and U5 small nuclear ribonucleoproteins (snRNPs), the building blocks of the spliceosome. This is Probable small nuclear ribonucleoprotein E (snr-6) from Caenorhabditis elegans.